The primary structure comprises 130 residues: Small ribosomal subunit protein uS8A (130 aa).

The protein belongs to the universal ribosomal protein uS8 family. As to quaternary structure, component of the small ribosomal subunit (SSU). Mature yeast ribosomes consist of a small (40S) and a large (60S) subunit. The 40S small subunit contains 1 molecule of ribosomal RNA (18S rRNA) and 33 different proteins (encoded by 57 genes). The large 60S subunit contains 3 rRNA molecules (25S, 5.8S and 5S rRNA) and 46 different proteins (encoded by 81 genes).

The protein localises to the cytoplasm. In terms of biological role, component of the ribosome, a large ribonucleoprotein complex responsible for the synthesis of proteins in the cell. The small ribosomal subunit (SSU) binds messenger RNAs (mRNAs) and translates the encoded message by selecting cognate aminoacyl-transfer RNA (tRNA) molecules. The large subunit (LSU) contains the ribosomal catalytic site termed the peptidyl transferase center (PTC), which catalyzes the formation of peptide bonds, thereby polymerizing the amino acids delivered by tRNAs into a polypeptide chain. The nascent polypeptides leave the ribosome through a tunnel in the LSU and interact with protein factors that function in enzymatic processing, targeting, and the membrane insertion of nascent chains at the exit of the ribosomal tunnel. In Saccharomyces cerevisiae (strain ATCC 204508 / S288c) (Baker's yeast), this protein is Small ribosomal subunit protein uS8A.